Consider the following 496-residue polypeptide: Cobyric acid synthase (496 aa).

Positions 258–427 (TLTVAAIRLP…WHGLLDNDAL (170 aa)) constitute a GATase cobBQ-type domain. The Nucleophile role is filled by cysteine 339. Residue histidine 419 is part of the active site.

It belongs to the CobB/CobQ family. CobQ subfamily.

It participates in cofactor biosynthesis; adenosylcobalamin biosynthesis. Its function is as follows. Catalyzes amidations at positions B, D, E, and G on adenosylcobyrinic A,C-diamide. NH(2) groups are provided by glutamine, and one molecule of ATP is hydrogenolyzed for each amidation. The protein is Cobyric acid synthase of Mycolicibacterium smegmatis (strain ATCC 700084 / mc(2)155) (Mycobacterium smegmatis).